Here is a 209-residue protein sequence, read N- to C-terminus: Ribosomal RNA large subunit methyltransferase E (209 aa).

S-adenosyl-L-methionine contacts are provided by G63, W65, D83, D99, and D124. Catalysis depends on K164, which acts as the Proton acceptor. Residues E191 to G209 form the TRAM domain.

The protein belongs to the class I-like SAM-binding methyltransferase superfamily. RNA methyltransferase RlmE family.

It is found in the cytoplasm. It catalyses the reaction uridine(2552) in 23S rRNA + S-adenosyl-L-methionine = 2'-O-methyluridine(2552) in 23S rRNA + S-adenosyl-L-homocysteine + H(+). Functionally, specifically methylates the uridine in position 2552 of 23S rRNA at the 2'-O position of the ribose in the fully assembled 50S ribosomal subunit. This Haemophilus influenzae (strain ATCC 51907 / DSM 11121 / KW20 / Rd) protein is Ribosomal RNA large subunit methyltransferase E.